We begin with the raw amino-acid sequence, 74 residues long: UPF0435 protein Bcer98_0391 (74 aa).

It belongs to the UPF0435 family.

This is UPF0435 protein Bcer98_0391 from Bacillus cytotoxicus (strain DSM 22905 / CIP 110041 / 391-98 / NVH 391-98).